A 607-amino-acid chain; its full sequence is Albumin (607 aa).

The first 18 residues, 1–18 (MKWVTFISLLLLFSSAYS), serve as a signal peptide directing secretion. Residues 19–24 (RGVFRR) constitute a propeptide that is removed on maturation. 3 consecutive Albumin domains span residues 19–209 (RGVF…DAMR), 210–402 (EKVL…KLKH), and 403–600 (LVDE…KLVA). His-27 is a binding site for Cu cation. A Phosphoserine modification is found at Ser-29. Ca(2+) is bound by residues Glu-30 and Asp-37. Cys-77 and Cys-86 are disulfide-bonded. Residues Ser-82 and Ser-89 each carry the phosphoserine modification. His-91 provides a ligand contact to Zn(2+). 6 cysteine pairs are disulfide-bonded: Cys-99/Cys-115, Cys-114/Cys-125, Cys-147/Cys-192, Cys-191/Cys-200, Cys-223/Cys-269, and Cys-268/Cys-276. A Phosphothreonine modification is found at Thr-107. Lys-228 carries the post-translational modification N6-succinyllysine. Residue Glu-267 participates in Ca(2+) binding. Zn(2+) contacts are provided by His-270 and Asp-272. Positions 272, 275, 278, and 282 each coordinate Ca(2+). 8 cysteine pairs are disulfide-bonded: Cys-288–Cys-302, Cys-301–Cys-312, Cys-339–Cys-384, Cys-383–Cys-392, Cys-415–Cys-461, Cys-460–Cys-471, Cys-484–Cys-500, and Cys-499–Cys-510. Ser-296 carries the post-translational modification Phosphoserine. Ser-442 carries the phosphoserine modification. Residues Thr-443 and Thr-445 each carry the phosphothreonine modification. The residue at position 459 (Lys-459) is an N6-succinyllysine. Position 512 is a phosphoserine (Ser-512). 2 disulfide bridges follow: Cys-537–Cys-582 and Cys-581–Cys-590. At Lys-557 the chain carries N6-methyllysine. Thr-569 carries the post-translational modification Phosphothreonine. Lys-587 is modified (N6-succinyllysine).

It belongs to the ALB/AFP/VDB family. As to quaternary structure, interacts with FCGRT; this interaction regulates ALB homeostasis. Interacts with TASOR. In plasma, occurs in a covalently-linked complex with chromophore-bound alpha-1-microglobulin; this interaction does not prevent fatty acid binding to ALB. Post-translationally, phosphorylated by FAM20C in the extracellular medium. In terms of tissue distribution, plasma.

The protein resides in the secreted. In terms of biological role, binds water, Ca(2+), Na(+), K(+), fatty acids, hormones, bilirubin and drugs. Its main function is the regulation of the colloidal osmotic pressure of blood. Major zinc transporter in plasma, typically binds about 80% of all plasma zinc. Major calcium and magnesium transporter in plasma, binds approximately 45% of circulating calcium and magnesium in plasma. Potentially has more than two calcium-binding sites and might additionally bind calcium in a non-specific manner. The shared binding site between zinc and calcium at residue Asp-272 suggests a crosstalk between zinc and calcium transport in the blood. The rank order of affinity is zinc &gt; calcium &gt; magnesium. Binds to the bacterial siderophore enterobactin and inhibits enterobactin-mediated iron uptake of E.coli from ferric transferrin, and may thereby limit the utilization of iron and growth of enteric bacteria such as E.coli. Does not prevent iron uptake by the bacterial siderophore aerobactin. The sequence is that of Albumin (ALB) from Ovis aries (Sheep).